The primary structure comprises 380 residues: Cytochrome b (380 aa).

Helical transmembrane passes span 34–54, 78–99, 114–134, and 179–199; these read FGSL…LLAT, WLIR…YLHI, WNTG…GYVL, and FFAL…IHLT. Positions 84 and 98 each coordinate heme b. 2 residues coordinate heme b: histidine 183 and histidine 197. Residue histidine 202 coordinates a ubiquinone. 4 helical membrane-spanning segments follow: residues 227–247, 289–309, 321–341, and 348–368; these read LKDT…ALFS, LGGV…PLLH, FSQF…WVGS, and FIII…ILLP.

Belongs to the cytochrome b family. In terms of assembly, the cytochrome bc1 complex contains 11 subunits: 3 respiratory subunits (MT-CYB, CYC1 and UQCRFS1), 2 core proteins (UQCRC1 and UQCRC2) and 6 low-molecular weight proteins (UQCRH/QCR6, UQCRB/QCR7, UQCRQ/QCR8, UQCR10/QCR9, UQCR11/QCR10 and a cleavage product of UQCRFS1). This cytochrome bc1 complex then forms a dimer. Heme b serves as cofactor.

It is found in the mitochondrion inner membrane. Its function is as follows. Component of the ubiquinol-cytochrome c reductase complex (complex III or cytochrome b-c1 complex) that is part of the mitochondrial respiratory chain. The b-c1 complex mediates electron transfer from ubiquinol to cytochrome c. Contributes to the generation of a proton gradient across the mitochondrial membrane that is then used for ATP synthesis. The chain is Cytochrome b (MT-CYB) from Garrodia nereis (Grey-backed storm-petrel).